The primary structure comprises 377 residues: MLKFRNFFKLTLLTLASAFFLSGCANINLISAVGSSSVQPLLNKLSSYYVLNENNDNDKLVEISVQAGGSNAGIRAIINGFADIGNVSKNPKEYAKENEKKWRDKKLKTLTIGKDAIAVIYKAPQELKGKLLLTKDNINDLYDLFAGVKTINIDKFVKKDTKNMSNEKDYPLTSFPRTGGSFASGTAEAFLNFSALKSDKTLDSQTRDILKGIINYGPLAKPTSETNIEAFNTFVTNLQDPNLFGMIYLSLGFIQNNLQAIKNNGFEILPIKYENKEVLPSNQTVSQNEYKWVRPLNSIVSLSEENKNIDEIKTFFNWLFFNGKKDVIKNIYDEFGILQLTEDEKKKMFKTNDSSPMNLENFWVDDFAFSNPIFGAF.

The signal sequence occupies residues 1 to 23 (MLKFRNFFKLTLLTLASAFFLSG). C24 is lipidated: N-palmitoyl cysteine. A lipid anchor (S-diacylglycerol cysteine) is attached at C24.

It localises to the cell membrane. This is an uncharacterized protein from Mycoplasma genitalium (strain ATCC 33530 / DSM 19775 / NCTC 10195 / G37) (Mycoplasmoides genitalium).